We begin with the raw amino-acid sequence, 444 residues long: RING finger and transmembrane domain-containing protein 2 (444 aa).

Residues 1-181 (MWLFTVNQVL…ILLAKLCFQH (181 aa)) are Extracellular-facing. Disordered regions lie at residues 13-41 (MQRR…ASVD) and 92-149 (PASR…PGTP). Over residues 107–121 (YHHRQPHHHFHHGGH) the composition is skewed to basic residues. A compositionally biased stretch (basic and acidic residues) spans 131–140 (GGDHRGHSEE). A helical membrane pass occupies residues 182–202 (KLGIAVCIGMASTFAYANSTL). The Cytoplasmic portion of the chain corresponds to 203-214 (REQVSLKEKRSV). The helical transmembrane segment at 215 to 235 (LVILWILAFLAGNTLYVLYTF) threads the bilayer. Topologically, residues 236–255 (SSQQLYNSLIFLKPNLETLD) are extracellular. Residues 256-276 (FFDLLWIVGIADFVLKYITIA) form a helical membrane-spanning segment. The Cytoplasmic portion of the chain corresponds to 277 to 329 (LKCLIVALPKIILAVKSKGKFYLVIEELSQLFRSLVPIQLWYKYIMGDDSSNS). A helical transmembrane segment spans residues 330–350 (YFLGGVLIVLYSLCKSFDICG). Topologically, residues 351 to 444 (RVGGVRKALK…GATSAHFQVY (94 aa)) are extracellular. The segment at 384 to 422 (CAICQAEFREPLILLCQHVFCEECLCLWLDRERTCPLSR) adopts an RING-type; degenerate zinc-finger fold.

It localises to the membrane. Functionally, E3 ubiquitin-protein ligase that negatively regulates IL3-dependent cellular responses through IL3RA ubiquitination and degradation by the proteasome, having an anti-inflammatory effect. This chain is RING finger and transmembrane domain-containing protein 2 (RNFT2), found in Pongo abelii (Sumatran orangutan).